A 547-amino-acid chain; its full sequence is Sensor histidine kinase CitA (547 aa).

The Cytoplasmic segment spans residues 1 to 23 (MSIYPMYTRKITHWFARRSFQNR). The chain crosses the membrane as a helical span at residues 24 to 44 (IFLLILFTSTIVMLAMSWYLT). The Periplasmic portion of the chain corresponds to 45–180 (DITEERLHYQ…TIEQLENWLS (136 aa)). 4 residues coordinate citrate: Arg109, His112, Arg150, and Lys152. Residues 181-201 (LQISSLLIPMAIMLLLLLFCA) form a helical membrane-spanning segment. Topologically, residues 202 to 547 (RRFSLHIKKQ…IPLTRDEHHG (346 aa)) are cytoplasmic. The 40-residue stretch at 225–264 (IQQSVLFESVFEGLIAIDSDYKITAINQTARRLLNLSQPE) folds into the PAS domain. A Histidine kinase domain is found at 347–542 (AVQHEHRNLI…IFTLYIPLTR (196 aa)). A Phosphohistidine; by autocatalysis modification is found at His350.

Homodimer. In vitro CitB and the CitA kinase domain form a complex, formation of which is enhanced by ATP. Post-translationally, autophosphorylated.

The protein localises to the cell inner membrane. It carries out the reaction ATP + protein L-histidine = ADP + protein N-phospho-L-histidine.. Its function is as follows. Member of the two-component regulatory system CitA/CitB. Probably activates CitB by phosphorylation. The periplasmic domain binds H-citrate(2-), which is essential for induction of the citrate-fermentation genes. This chain is Sensor histidine kinase CitA (citA), found in Klebsiella pneumoniae.